We begin with the raw amino-acid sequence, 329 residues long: MSAYIIETLIKILILVAVFSALGGFATYIERKVLAYFQRRLGPCYVGPFGLLQVAADGIKLFTKEDIIPQGANKFIFTLAPIIAMVSAFVSMAPIPFFPNFTLFGYEIKPLISDINIGFLFFLAVGSAGIYAPILAGLASNNKYSLIGSARATIQLLSFEVVSTLTILAPLMVVGSLSLVEINHYQSGGFLDWLVFKQPLAFVLFLIASYAELNRTPFDLLEHEAEIVAGYCTEYSGLKWGMFFLAEYAHLFAFSFVISIVFFGGFNAWGFIPGGIAILIKAGFFVFLSMWVRATYPHVRPDQLMNMCWKIMLPLALLNIVLTGIVILI.

A run of 9 helical transmembrane segments spans residues 9-29 (LIKILILVAVFSALGGFATYI), 42-62 (GPCYVGPFGLLQVAADGIKLF), 75-95 (FIFTLAPIIAMVSAFVSMAPI), 117-137 (IGFLFFLAVGSAGIYAPILAG), 154-174 (IQLLSFEVVSTLTILAPLMVV), 188-208 (GGFLDWLVFKQPLAFVLFLIA), 238-258 (LKWGMFFLAEYAHLFAFSFVI), 269-291 (WGFIPGGIAILIKAGFFVFLSMW), and 309-329 (WKIMLPLALLNIVLTGIVILI).

This sequence belongs to the complex I subunit 1 family. In terms of assembly, NDH-1 is composed of 14 different subunits. Subunits NuoA, H, J, K, L, M, N constitute the membrane sector of the complex.

It is found in the cell inner membrane. The enzyme catalyses a quinone + NADH + 5 H(+)(in) = a quinol + NAD(+) + 4 H(+)(out). Functionally, NDH-1 shuttles electrons from NADH, via FMN and iron-sulfur (Fe-S) centers, to quinones in the respiratory chain. The immediate electron acceptor for the enzyme in this species is believed to be ubiquinone. Couples the redox reaction to proton translocation (for every two electrons transferred, four hydrogen ions are translocated across the cytoplasmic membrane), and thus conserves the redox energy in a proton gradient. This subunit may bind ubiquinone. This is NADH-quinone oxidoreductase subunit H from Helicobacter pylori (strain J99 / ATCC 700824) (Campylobacter pylori J99).